The following is a 277-amino-acid chain: Shikimate dehydrogenase (NADP(+)) (277 aa).

Shikimate is bound by residues 15–17 (SLS) and threonine 62. The active-site Proton acceptor is lysine 66. 2 residues coordinate shikimate: asparagine 87 and aspartate 102. NADP(+) contacts are provided by residues 127-131 (GAGGA), 151-156 (NRTVDK), and isoleucine 219. Tyrosine 221 contributes to the shikimate binding site. Glycine 242 contributes to the NADP(+) binding site.

This sequence belongs to the shikimate dehydrogenase family. In terms of assembly, homodimer.

It carries out the reaction shikimate + NADP(+) = 3-dehydroshikimate + NADPH + H(+). Its pathway is metabolic intermediate biosynthesis; chorismate biosynthesis; chorismate from D-erythrose 4-phosphate and phosphoenolpyruvate: step 4/7. In terms of biological role, involved in the biosynthesis of the chorismate, which leads to the biosynthesis of aromatic amino acids. Catalyzes the reversible NADPH linked reduction of 3-dehydroshikimate (DHSA) to yield shikimate (SA). The protein is Shikimate dehydrogenase (NADP(+)) of Bacillus cereus (strain G9842).